The chain runs to 190 residues: Peptidyl-tRNA hydrolase (190 aa).

Tyr18 serves as a coordination point for tRNA. His23 acts as the Proton acceptor in catalysis. TRNA is bound by residues Tyr69, Asn71, and Asn117.

This sequence belongs to the PTH family. In terms of assembly, monomer.

It localises to the cytoplasm. It carries out the reaction an N-acyl-L-alpha-aminoacyl-tRNA + H2O = an N-acyl-L-amino acid + a tRNA + H(+). In terms of biological role, hydrolyzes ribosome-free peptidyl-tRNAs (with 1 or more amino acids incorporated), which drop off the ribosome during protein synthesis, or as a result of ribosome stalling. Its function is as follows. Catalyzes the release of premature peptidyl moieties from peptidyl-tRNA molecules trapped in stalled 50S ribosomal subunits, and thus maintains levels of free tRNAs and 50S ribosomes. The sequence is that of Peptidyl-tRNA hydrolase from Rhodococcus erythropolis (strain PR4 / NBRC 100887).